Reading from the N-terminus, the 117-residue chain is UPF0102 protein Spro_4337 (117 aa).

The protein belongs to the UPF0102 family.

The sequence is that of UPF0102 protein Spro_4337 from Serratia proteamaculans (strain 568).